Reading from the N-terminus, the 209-residue chain is Ribosomal RNA large subunit methyltransferase E (209 aa).

5 residues coordinate S-adenosyl-L-methionine: glycine 63, tryptophan 65, aspartate 83, aspartate 99, and aspartate 124. Lysine 164 acts as the Proton acceptor in catalysis.

This sequence belongs to the class I-like SAM-binding methyltransferase superfamily. RNA methyltransferase RlmE family.

The protein resides in the cytoplasm. It carries out the reaction uridine(2552) in 23S rRNA + S-adenosyl-L-methionine = 2'-O-methyluridine(2552) in 23S rRNA + S-adenosyl-L-homocysteine + H(+). Specifically methylates the uridine in position 2552 of 23S rRNA at the 2'-O position of the ribose in the fully assembled 50S ribosomal subunit. This chain is Ribosomal RNA large subunit methyltransferase E, found in Shewanella loihica (strain ATCC BAA-1088 / PV-4).